Reading from the N-terminus, the 437-residue chain is Cysteine--tRNA ligase (437 aa).

Position 31 (C31) interacts with Zn(2+). The 'HIGH' region motif lies at P33–N43. Residues C205, H230, and E234 each contribute to the Zn(2+) site. Residues K262–S266 carry the 'KMSKS' region motif. Position 265 (K265) interacts with ATP.

The protein belongs to the class-I aminoacyl-tRNA synthetase family. In terms of assembly, monomer. Requires Zn(2+) as cofactor.

It localises to the cytoplasm. It catalyses the reaction tRNA(Cys) + L-cysteine + ATP = L-cysteinyl-tRNA(Cys) + AMP + diphosphate. The protein is Cysteine--tRNA ligase (cysS) of Mycoplasma pneumoniae (strain ATCC 29342 / M129 / Subtype 1) (Mycoplasmoides pneumoniae).